A 302-amino-acid polypeptide reads, in one-letter code: Acetylglutamate kinase (302 aa).

Residues 68-69 (GG), arginine 90, and asparagine 194 contribute to the substrate site.

It belongs to the acetylglutamate kinase family. ArgB subfamily.

It is found in the cytoplasm. It carries out the reaction N-acetyl-L-glutamate + ATP = N-acetyl-L-glutamyl 5-phosphate + ADP. It functions in the pathway amino-acid biosynthesis; L-arginine biosynthesis; N(2)-acetyl-L-ornithine from L-glutamate: step 2/4. Its function is as follows. Catalyzes the ATP-dependent phosphorylation of N-acetyl-L-glutamate. The protein is Acetylglutamate kinase of Acinetobacter baumannii (strain AB307-0294).